The sequence spans 495 residues: MKSQLLSLAVAVTTISQGVVGQEPFGWPFKPMVTQDDLQNKIKLKDIMAGVEKLQSISDAHPEKNRVFGGNGHKDTVEWIYNEIKATGYYDVKKQEQVHLWSHAEATVSANGKDLKASAMSYSPPASKIMAELVVAKNNGCNATDYPENTQGKIVLVERGVCSFGEKSSQAGDAKAAGAIVYNNVPGSLAGTLGGLDKRHVPTAGLSQEDGKNLATLIASGKVDVTMNVISLFENRTTWNVIAETKGGDHNNVIMLGAHSDSVDAGPGINDNGSGSIGIMTVAKALTNFKLNNAVRFAWWTAEEFGLLGSTFYVNSLDDRELHKVKLYLNFDMIGSPNFANQIYDGDGSAYNMTGPAGSAEIEYLFEKFFDDQGIPHQPTAFTGRSDYSAFIKRNVPAGGLFTGAEVVKTPEQVKLFGGEAGVAYDKNYHGKGDTVANINKGAIFLNTRAIAYSVAEYARSLKGFPTRPKTGKRDVNPQYSKMPGGGCGHHTVFM.

The first 21 residues, M1–G21, serve as a signal peptide directing secretion. The PA domain occupies M130–T216. Residues N142 and N235 are each glycosylated (N-linked (GlcNAc...) asparagine). Zn(2+)-binding residues include H259 and D271. N272 carries N-linked (GlcNAc...) asparagine glycosylation. The Proton acceptor role is filled by E303. Residues E304 and D332 each contribute to the Zn(2+) site. N352 carries N-linked (GlcNAc...) asparagine glycosylation. Residue H430 participates in Zn(2+) binding.

The protein belongs to the peptidase M28 family. M28A subfamily. Monomer. Zn(2+) serves as cofactor.

Its subcellular location is the secreted. In terms of biological role, extracellular aminopeptidase that releases a wide variety of amino acids from natural peptides and contributes to pathogenicity. The sequence is that of Probable leucine aminopeptidase 2 (LAP2) from Trichophyton verrucosum (strain HKI 0517).